Here is a 250-residue protein sequence, read N- to C-terminus: Ubiquinone/menaquinone biosynthesis C-methyltransferase UbiE (250 aa).

Residues Ser73, Asp94, and 122–123 (NA) contribute to the S-adenosyl-L-methionine site.

Belongs to the class I-like SAM-binding methyltransferase superfamily. MenG/UbiE family.

The enzyme catalyses a 2-demethylmenaquinol + S-adenosyl-L-methionine = a menaquinol + S-adenosyl-L-homocysteine + H(+). It catalyses the reaction a 2-methoxy-6-(all-trans-polyprenyl)benzene-1,4-diol + S-adenosyl-L-methionine = a 5-methoxy-2-methyl-3-(all-trans-polyprenyl)benzene-1,4-diol + S-adenosyl-L-homocysteine + H(+). The protein operates within quinol/quinone metabolism; menaquinone biosynthesis; menaquinol from 1,4-dihydroxy-2-naphthoate: step 2/2. It functions in the pathway cofactor biosynthesis; ubiquinone biosynthesis. In terms of biological role, methyltransferase required for the conversion of demethylmenaquinol (DMKH2) to menaquinol (MKH2) and the conversion of 2-polyprenyl-6-methoxy-1,4-benzoquinol (DDMQH2) to 2-polyprenyl-3-methyl-6-methoxy-1,4-benzoquinol (DMQH2). This is Ubiquinone/menaquinone biosynthesis C-methyltransferase UbiE from Legionella pneumophila (strain Paris).